A 403-amino-acid polypeptide reads, in one-letter code: Phosphoglycerate kinase (403 aa).

Substrate contacts are provided by residues 21-23, arginine 36, 59-62, arginine 119, and arginine 159; these read DFN and HLGR. ATP-binding positions include lysine 214, glycine 301, glutamate 332, and 359–362; that span reads GGDS.

This sequence belongs to the phosphoglycerate kinase family. As to quaternary structure, monomer.

The protein localises to the cytoplasm. It carries out the reaction (2R)-3-phosphoglycerate + ATP = (2R)-3-phospho-glyceroyl phosphate + ADP. It functions in the pathway carbohydrate degradation; glycolysis; pyruvate from D-glyceraldehyde 3-phosphate: step 2/5. This is Phosphoglycerate kinase from Lactobacillus helveticus (strain DPC 4571).